The following is a 309-amino-acid chain: G-protein coupled receptor 35 (309 aa).

Over 1–24 (MNGTYNTCGSSDLTWPPAIKLGFY) the chain is Extracellular. N-linked (GlcNAc...) asparagine glycosylation occurs at Asn2. A helical transmembrane segment spans residues 25-45 (AYLGVLLVLGLLLNSLALWVF). Over 46-56 (CCRMQQWTETR) the chain is Cytoplasmic. A helical transmembrane segment spans residues 57 to 77 (IYMTNLAVADLCLLCTLPFVL). Over 78–90 (HSLRDTSDTPLCQ) the chain is Extracellular. A disulfide bridge connects residues Cys89 and Cys162. The chain crosses the membrane as a helical span at residues 91–112 (LSQGIYLTNRYMSISLVTAIAV). Over 113 to 135 (DRYVAVRHPLRARGLRSPRQAAA) the chain is Cytoplasmic. Residues 136–156 (VCAVLWVLVIGSLVARWLLGI) form a helical membrane-spanning segment. The Extracellular portion of the chain corresponds to 157–174 (QEGGFCFRSTRHNFNSMA). A helical transmembrane segment spans residues 175–195 (FPLLGFYLPLAVVVFCSLKVV). Topologically, residues 196–218 (TALAQRPPTDVGQAEATRKAARM) are cytoplasmic. The chain crosses the membrane as a helical span at residues 219–239 (VWANLLVFVVCFLPLHVGLTV). Residues 240-258 (RLAVGWNACALLETIRRAL) are Extracellular-facing. A helical membrane pass occupies residues 259 to 279 (YITSKLSDANCCLDAICYYYM). The Cytoplasmic segment spans residues 280–309 (AKEFQEASALAVAPSAKAHKSQDSLCVTLA). 2 positions are modified to phosphoserine: Ser287 and Ser294. Residues Ser300 and Ser303 each carry the phosphoserine; by GRK5 and GRK6 modification. Phosphothreonine is present on Thr307.

It belongs to the G-protein coupled receptor 1 family. In terms of assembly, interacts with GNA13. Interacts with ARRB2. Post-translationally, multiply phosphorylated in clusters of serines and threonines in the C-terminal tail. Phosphorylation of Ser-300 and Ser-303 is mediated by GRK5 and/or GRK6. In terms of tissue distribution, predominantly expressed in immune and gastrointestinal tissues.

The protein resides in the cell membrane. Its function is as follows. G-protein coupled receptor that binds to several ligands including the tryptophan metabolite kynurenic acid (KYNA), lysophosphatidic acid (LPA) or 5-hydroxyindoleacetic acid (5-HIAA) with high affinity, leading to rapid and transient activation of numerous intracellular signaling pathways. Plays a role in neutrophil recruitment to sites of inflammation and bacterial clearance through the major serotonin metabolite 5-HIAA that acts as a physiological ligand. Stimulates lipid metabolism, thermogenic, and anti-inflammatory gene expression in adipose tissue once activated by kynurenic acid. In macrophages, activation by lysophosphatidic acid promotes GPR35-induced signaling with a distinct transcriptional profile characterized by TNF production associated with ERK and NF-kappa-B activation. In turn, induces chemotaxis of macrophages. This chain is G-protein coupled receptor 35 (GPR35), found in Homo sapiens (Human).